The primary structure comprises 229 residues: General odorant-binding protein 69 (229 aa).

The first 20 residues, 1–20 (MDRLLLVLLSSASLLLTVYG), serve as a signal peptide directing secretion. Cys66 and Cys106 form a disulfide bridge.

This sequence belongs to the PBP/GOBP family.

The protein localises to the secreted. Functionally, present in the aqueous fluid surrounding olfactory sensory dendrites and are thought to aid in the capture and transport of hydrophobic odorants into and through this fluid. In Anopheles gambiae (African malaria mosquito), this protein is General odorant-binding protein 69 (Obp69).